The sequence spans 67 residues: LPS-assembly lipoprotein LptM (67 aa).

The N-terminal stretch at 1 to 19 (MKNVFKTLAVLLTLFSLTG) is a signal peptide. The N-palmitoyl cysteine moiety is linked to residue Cys20. Cys20 carries the S-diacylglycerol cysteine lipid modification. The disordered stretch occupies residues 26-67 (LYFPPADKNAPPPTKKVDSQTQSTMPDKNDRATGDGPSQVNY).

The protein belongs to the LptM family. In terms of assembly, interacts with the outer membrane embedded portion of the LPS translocon formed by LptD and LptE (LptDE).

Its subcellular location is the cell outer membrane. Its function is as follows. Component of the lipopolysaccharide (LPS) transport (Lpt) pathway that promotes efficient assembly of the outer membrane LPS translocon (LptDE) by the BAM complex. Facilitates oxidative maturation of LptD by stabilizing a conformation of the LPS translocon in which LptD can efficiently acquire native disulfide bonds, thereby activating the LPS translocon. This chain is LPS-assembly lipoprotein LptM, found in Salmonella typhi.